The sequence spans 243 residues: E3 ubiquitin-protein ligase RMA3 (243 aa).

Residues 44 to 92 (CNICLDTAHDPVVTLCGHLFCWPCIYKWLHVQLSSVSVDQHQNNCPVCK) form an RING-type zinc finger. The tract at residues 110–135 (SPSSTFGSKKQDALSTDIPRRPAPSA) is disordered. A helical; Anchor for type IV membrane protein membrane pass occupies residues 223-243 (KSLNRVSIFFLCCIILCLLLF).

Ubiquitous. Highly expressed in roots.

Its subcellular location is the endoplasmic reticulum membrane. The catalysed reaction is S-ubiquitinyl-[E2 ubiquitin-conjugating enzyme]-L-cysteine + [acceptor protein]-L-lysine = [E2 ubiquitin-conjugating enzyme]-L-cysteine + N(6)-ubiquitinyl-[acceptor protein]-L-lysine.. It participates in protein modification; protein ubiquitination. In terms of biological role, E3 ubiquitin-protein ligase. The polypeptide is E3 ubiquitin-protein ligase RMA3 (RMA3) (Arabidopsis thaliana (Mouse-ear cress)).